The sequence spans 350 residues: Inhibin beta E chain (350 aa).

Positions 1–21 (MGLSNVQLWTILLWALAWVQS) are cleaved as a signal peptide. Residues 22-236 (TRSACPSCGA…EPGAGRARRR (215 aa)) constitute a propeptide that is removed on maturation. N-linked (GlcNAc...) asparagine glycosylation occurs at N198. Disulfide bonds link C240–C248, C247–C315, C276–C347, and C280–C349.

Belongs to the TGF-beta family. Homodimeric or heterodimeric through association with alpha and beta subunits, linked by one or more disulfide bonds. Inhibins are heterodimers of one alpha and one beta subunit. Activins are homo- or heterodimers of beta subunits only.

It localises to the secreted. Functionally, inhibins and activins inhibit and activate, respectively, the secretion of follitropin by the pituitary gland. Inhibins/activins are involved in regulating a number of diverse functions such as hypothalamic and pituitary hormone secretion, gonadal hormone secretion, germ cell development and maturation, erythroid differentiation, insulin secretion, nerve cell survival, embryonic axial development or bone growth, depending on their subunit composition. Inhibins appear to oppose the functions of activins. Its function is as follows. Activin E is a homodimer of INHBE secreted by the liver that plays a crucial role in regulating metabolic homeostasis particularly in lipid metabolism and energy homeostasis. Plays a central role in the regulation of adipose tissue lipolysis by preventing the influx of fatty acids from adipose tissue into the liver. Mechanistically, signals via ACVR1C to activate SMAD2/3 signaling, suppressing PPARG target genes in adipose tissue, thereby reducing liver lipid content and improving glycemic control. Induces beige adipocyte formation and thermogenesis in response to cold exposure. The polypeptide is Inhibin beta E chain (Inhbe) (Rattus norvegicus (Rat)).